A 290-amino-acid chain; its full sequence is 33 kDa chaperonin (290 aa).

Intrachain disulfides connect Cys235–Cys237 and Cys268–Cys271.

It belongs to the HSP33 family. Under oxidizing conditions two disulfide bonds are formed involving the reactive cysteines. Under reducing conditions zinc is bound to the reactive cysteines and the protein is inactive.

Its subcellular location is the cytoplasm. Redox regulated molecular chaperone. Protects both thermally unfolding and oxidatively damaged proteins from irreversible aggregation. Plays an important role in the bacterial defense system toward oxidative stress. The polypeptide is 33 kDa chaperonin (Streptococcus equi subsp. equi (strain 4047)).